We begin with the raw amino-acid sequence, 1231 residues long: Alpha-protein kinase 1 (1231 aa).

ADP-D-glycero-beta-D-manno-heptose contacts are provided by residues Phe61, Gln67, Arg116, 150-153 (RQAR), Asp231, Lys233, 236-237 (ST), and Phe295. Disordered stretches follow at residues 508–540 (ERVS…RSWT), 609–637 (GSGQ…SSRA), 692–739 (GSNN…GDVP), 767–791 (TFAP…SPSQ), 811–843 (PDGS…DEEG), and 859–888 (AHRP…PIFD). A compositionally biased stretch (polar residues) spans 509 to 522 (RVSSQDSRSTASSK). Over residues 524 to 537 (SKKDQGKLQRERGR) the composition is skewed to basic and acidic residues. Positions 700–714 (SSHSCGSDSWSLSSS) are enriched in low complexity. Residues 775-784 (PEGETAESTD) show a composition bias toward acidic residues. The Alpha-type protein kinase domain occupies 1003–1223 (KYSKKSELWT…ICHRLSLTRP (221 aa)).

The protein belongs to the protein kinase superfamily. Alpha-type protein kinase family. ALPK subfamily. In terms of tissue distribution, widely expressed. Expressed in the retina and in sweat glands, especially in the myoepithelial cells.

The protein localises to the cytoplasm. It is found in the cytosol. Its subcellular location is the cytoskeleton. It localises to the spindle pole. The protein resides in the microtubule organizing center. The protein localises to the centrosome. It is found in the cell projection. Its subcellular location is the cilium. It carries out the reaction L-seryl-[protein] + ATP = O-phospho-L-seryl-[protein] + ADP + H(+). The catalysed reaction is L-threonyl-[protein] + ATP = O-phospho-L-threonyl-[protein] + ADP + H(+). Serine/threonine-protein kinase activity is stimulated upon ADP-D-glycero-beta-D-manno-heptose (ADP-Heptose)-binding. Functionally, serine/threonine-protein kinase that detects bacterial pathogen-associated molecular pattern metabolites (PAMPs) and initiates an innate immune response, a critical step for pathogen elimination and engagement of adaptive immunity. Specifically recognizes and binds ADP-D-glycero-beta-D-manno-heptose (ADP-Heptose), a potent PAMP present in all Gram-negative and some Gram-positive bacteria. ADP-Heptose-binding stimulates its kinase activity to phosphorylate and activate TIFA, triggering pro-inflammatory NF-kappa-B signaling. May be involved in monosodium urate monohydrate (MSU)-induced inflammation by mediating phosphorylation of unconventional myosin MYO9A. May also play a role in apical protein transport by mediating phosphorylation of unconventional myosin MYO1A. May play a role in ciliogenesis. The chain is Alpha-protein kinase 1 from Mus musculus (Mouse).